Consider the following 193-residue polypeptide: 3-isopropylmalate dehydratase small subunit (193 aa).

Belongs to the LeuD family. LeuD type 1 subfamily. In terms of assembly, heterodimer of LeuC and LeuD.

The enzyme catalyses (2R,3S)-3-isopropylmalate = (2S)-2-isopropylmalate. It functions in the pathway amino-acid biosynthesis; L-leucine biosynthesis; L-leucine from 3-methyl-2-oxobutanoate: step 2/4. In terms of biological role, catalyzes the isomerization between 2-isopropylmalate and 3-isopropylmalate, via the formation of 2-isopropylmaleate. This Bacillus cytotoxicus (strain DSM 22905 / CIP 110041 / 391-98 / NVH 391-98) protein is 3-isopropylmalate dehydratase small subunit.